The primary structure comprises 115 residues: NADH-ubiquinone oxidoreductase chain 3 (115 aa).

Helical transmembrane passes span 3–23, 55–75, and 86–106; these read LPLA…IAFW, FFLV…LLPL, and LMLT…AYEW.

This sequence belongs to the complex I subunit 3 family. As to quaternary structure, core subunit of respiratory chain NADH dehydrogenase (Complex I) which is composed of 45 different subunits. Interacts with TMEM186. Interacts with TMEM242.

It localises to the mitochondrion inner membrane. The enzyme catalyses a ubiquinone + NADH + 5 H(+)(in) = a ubiquinol + NAD(+) + 4 H(+)(out). Functionally, core subunit of the mitochondrial membrane respiratory chain NADH dehydrogenase (Complex I) which catalyzes electron transfer from NADH through the respiratory chain, using ubiquinone as an electron acceptor. Essential for the catalytic activity of complex I. In Lemur catta (Ring-tailed lemur), this protein is NADH-ubiquinone oxidoreductase chain 3.